The sequence spans 241 residues: Chaperone protein FimC (241 aa).

An N-terminal signal peptide occupies residues 1–36 (MSNKNVNVRKSQEITFCLLAGILMFMAMVVAGRAEA).

The protein belongs to the periplasmic pilus chaperone family.

Its subcellular location is the periplasm. Its function is as follows. Required for the biogenesis of type 1 fimbriae. Binds and interact with FimH. This is Chaperone protein FimC (fimC) from Escherichia coli O6:H1 (strain CFT073 / ATCC 700928 / UPEC).